The sequence spans 1354 residues: Phosphoribosylformylglycinamidine synthase (1354 aa).

ATP is bound by residues 327–338 (GATTGTGGRLRD), 407–409 (SGF), and Ala714. Mg(2+)-binding residues include Asp715, Glu754, Asn758, and Asp918. Ser920 contributes to the ATP binding site. The region spanning 1087–1337 (VAVLREEGVN…EVSPTQSESP (251 aa)) is the Glutamine amidotransferase type-1 domain. Cys1180 (nucleophile) is an active-site residue. Catalysis depends on residues His1310 and Glu1312.

The protein in the N-terminal section; belongs to the FGAMS family.

It catalyses the reaction N(2)-formyl-N(1)-(5-phospho-beta-D-ribosyl)glycinamide + L-glutamine + ATP + H2O = 2-formamido-N(1)-(5-O-phospho-beta-D-ribosyl)acetamidine + L-glutamate + ADP + phosphate + H(+). It functions in the pathway purine metabolism; IMP biosynthesis via de novo pathway; 5-amino-1-(5-phospho-D-ribosyl)imidazole from N(2)-formyl-N(1)-(5-phospho-D-ribosyl)glycinamide: step 1/2. Functionally, phosphoribosylformylglycinamidine synthase involved in the purines biosynthetic pathway. Catalyzes the ATP-dependent conversion of formylglycinamide ribonucleotide (FGAR) and glutamine to yield formylglycinamidine ribonucleotide (FGAM) and glutamate. Because of its role in metabolisms, is involved in sleep regulation. This chain is Phosphoribosylformylglycinamidine synthase, found in Drosophila melanogaster (Fruit fly).